The sequence spans 700 residues: Polyribonucleotide nucleotidyltransferase (700 aa).

Aspartate 491 and aspartate 497 together coordinate Mg(2+). The region spanning 558–617 (PNYAVIEINPDKIRDVIGKGGATIRQLTEETGAVIDIDDAGTIRIFGENKAATKAAIAKI) is the KH domain. Residues 627-695 (GKTYEGTVAR…NRGRIKLTMK (69 aa)) enclose the S1 motif domain.

It belongs to the polyribonucleotide nucleotidyltransferase family. In terms of assembly, component of the RNA degradosome, which is a multiprotein complex involved in RNA processing and mRNA degradation. Mg(2+) is required as a cofactor.

It localises to the cytoplasm. The catalysed reaction is RNA(n+1) + phosphate = RNA(n) + a ribonucleoside 5'-diphosphate. Involved in mRNA degradation. Catalyzes the phosphorolysis of single-stranded polyribonucleotides processively in the 3'- to 5'-direction. The chain is Polyribonucleotide nucleotidyltransferase from Psychrobacter arcticus (strain DSM 17307 / VKM B-2377 / 273-4).